The chain runs to 247 residues: GTP cyclohydrolase 1 type 2 homolog (247 aa).

A divalent metal cation-binding residues include histidine 63, histidine 64, aspartate 101, histidine 215, and glutamate 219.

It belongs to the GTP cyclohydrolase I type 2/NIF3 family. In terms of assembly, toroid-shaped homohexamer. In the hexamer, 3 dimers assemble to form a ring-like structure surrounding a central hole.

In terms of biological role, provides significant protection from radiation damage and may be involved in the degradation of radiation-damaged nucleotides. In Escherichia coli O157:H7, this protein is GTP cyclohydrolase 1 type 2 homolog (ybgI).